The sequence spans 523 residues: Katanin p60 ATPase-containing subunit A1 (523 aa).

The disordered stretch occupies residues Lys-82–Glu-215. Low complexity predominate over residues Ala-178–Ser-194. Gly-279–Thr-286 contacts ATP.

It belongs to the AAA ATPase family. Katanin p60 subunit A1 subfamily. As to quaternary structure, may homooligomerize. Component of KTN80-KTN1 complexes composed of a hexamer of KTN1-KTN80 heterodimers that sense microtubule (MT) geometry to confer precise MT severing. Interacts directly with KTN80.1, KTN80.2, KTN80.3 and KTN80.4. Can interact with KTN80.1. May interact with the kinesin related protein KIN14A. Interacts with microtubule polymers. Binds to IPGA1. As to expression, expressed ubiquitously, including siliques, flowers, leaves, stems and roots.

Its subcellular location is the cytoplasm. The protein resides in the cytoskeleton. The catalysed reaction is n ATP + n H2O + a microtubule = n ADP + n phosphate + (n+1) alpha/beta tubulin heterodimers.. In terms of biological role, severs microtubules in vitro in an ATP-dependent manner. Required for oligomerization of functional KTN80-KTN1 complexes that catalyze microtubule severing. This activity may promote rapid reorganization of cellular microtubule arrays. May be required for reorientation of cortical microtubule arrays during cellular elongation. Failure to correctly orient these arrays drastically compromises fiber length, cell wall thickness and mechanical strength. May also be required for the spatial organization of developmental cues within the root. Involved in the IPGA1- and AN-dependent regulation of pavement cells morphogenesis leading to puzzle shape. The polypeptide is Katanin p60 ATPase-containing subunit A1 (Arabidopsis thaliana (Mouse-ear cress)).